Reading from the N-terminus, the 181-residue chain is Ribulose bisphosphate carboxylase small subunit, chloroplastic 2 (181 aa).

The transit peptide at 1–57 directs the protein to the chloroplast; it reads MASSVISSAAVATRTNVTQAGSMIAPFTGLKSAATFPVSRKQNLDITSIASNGGRVR.

Belongs to the RuBisCO small chain family. In terms of assembly, heterohexadecamer of 8 large and 8 small subunits.

The protein localises to the plastid. It is found in the chloroplast. RuBisCO catalyzes two reactions: the carboxylation of D-ribulose 1,5-bisphosphate, the primary event in carbon dioxide fixation, as well as the oxidative fragmentation of the pentose substrate. Both reactions occur simultaneously and in competition at the same active site. Although the small subunit is not catalytic it is essential for maximal activity. The protein is Ribulose bisphosphate carboxylase small subunit, chloroplastic 2 of Solanum tuberosum (Potato).